Reading from the N-terminus, the 629-residue chain is Aspartate--tRNA(Asp/Asn) ligase (629 aa).

A disordered region spans residues 1 to 24 (MERSSRADLISEDSHPARTHTCGD). The span at 12–24 (EDSHPARTHTCGD) shows a compositional bias: basic and acidic residues. Glutamate 194 is an L-aspartate binding site. Positions 218 to 221 (QTYK) are aspartate. Arginine 240 lines the L-aspartate pocket. ATP is bound by residues 240–242 (RDE) and glutamine 249. Histidine 474 contacts L-aspartate. Glutamate 508 lines the ATP pocket. Arginine 515 contributes to the L-aspartate binding site. 560 to 563 (GLDR) serves as a coordination point for ATP.

It belongs to the class-II aminoacyl-tRNA synthetase family. Type 1 subfamily. As to quaternary structure, homodimer.

It localises to the cytoplasm. It catalyses the reaction tRNA(Asx) + L-aspartate + ATP = L-aspartyl-tRNA(Asx) + AMP + diphosphate. Its function is as follows. Aspartyl-tRNA synthetase with relaxed tRNA specificity since it is able to aspartylate not only its cognate tRNA(Asp) but also tRNA(Asn). Reaction proceeds in two steps: L-aspartate is first activated by ATP to form Asp-AMP and then transferred to the acceptor end of tRNA(Asp/Asn). The polypeptide is Aspartate--tRNA(Asp/Asn) ligase (Salinibacter ruber (strain DSM 13855 / M31)).